Consider the following 84-residue polypeptide: Cytochrome c oxidase subunit 12, mitochondrial (84 aa).

Residues 27–70 (TKHCWQNYVDYHKCILAKGEDFAPCRQFWLAYRSLCPSGWYQRW) enclose the CHCH domain. Positions 30–40 (CWQNYVDYHKC) match the Cx9C motif motif. 2 cysteine pairs are disulfide-bonded: cysteine 30–cysteine 62 and cysteine 40–cysteine 51. The Cx10C motif signature appears at 51–62 (CRQFWLAYRSLC).

Belongs to the cytochrome c oxidase subunit 6B family. As to quaternary structure, component of the cytochrome c oxidase (complex IV, CIV), a multisubunit enzyme composed of 11 subunits. The complex is composed of a catalytic core of 3 subunits Cox1, Cox2 and Cox3, encoded in the mitochondrial DNA, and 8 supernumerary subunits Cox4, Cox5a/Cox5, Cox6, Cox7, Cox8, Cox7a/Cox9, Cox6b/Cox12 and Cox6a/Cox13, which are encoded in the nuclear genome. The complex exists as a monomer or a dimer and forms respiratory supercomplexes (SCs) in the inner mitochondrial membrane with NADH-ubiquinone oxidoreductase (complex I, CI) and ubiquinol-cytochrome c oxidoreductase (cytochrome b-c1 complex, complex III, CIII), resulting in various different assemblies (supercomplexes I(1)IV(1), I(1)III(3)IV(2), III(2)IV(1) and III(2)IV(2) as well as larger supercomplexes of compositions like I(1)III(2)IV(5-6)).

The protein localises to the mitochondrion inner membrane. It functions in the pathway energy metabolism; oxidative phosphorylation. In terms of biological role, component of the cytochrome c oxidase, the last enzyme in the mitochondrial electron transport chain which drives oxidative phosphorylation. The respiratory chain contains 3 multisubunit complexes succinate dehydrogenase (complex II, CII), ubiquinol-cytochrome c oxidoreductase (cytochrome b-c1 complex, complex III, CIII) and cytochrome c oxidase (complex IV, CIV), that cooperate to transfer electrons derived from NADH and succinate to molecular oxygen, creating an electrochemical gradient over the inner membrane that drives transmembrane transport and the ATP synthase. Cytochrome c oxidase is the component of the respiratory chain that catalyzes the reduction of oxygen to water. Electrons originating from reduced cytochrome c in the intermembrane space (IMS) are transferred via the dinuclear copper A center (CU(A)) of Cox2 and heme A of Cox1 to the active site in Cox1, a binuclear center (BNC) formed by heme A3 and copper B (CU(B)). The BNC reduces molecular oxygen to 2 water molecules using 4 electrons from cytochrome c in the IMS and 4 protons from the mitochondrial matrix. This Neurospora crassa (strain ATCC 24698 / 74-OR23-1A / CBS 708.71 / DSM 1257 / FGSC 987) protein is Cytochrome c oxidase subunit 12, mitochondrial (cox-13).